We begin with the raw amino-acid sequence, 343 residues long: MSNTDKERAIAAALAQIEKSYGKGSVMKLGQRPHVDIEAVSTGSLGLDIALGIGGIPKGRIIEIFGPESSGKTTLTLHLIAEAQKKGGTCAFIDAEHALDPAYAKKLGVNIDELIISQPDTGEQALEIADTLIRSGGIDMIIIDSVAALVPKSEIEGEMGDAQMASQARLMSQALRKLTASINRTNCITVFINQIRMKIGVMFGSPETTTGGNALKFYASVRIDIRRIGSIKDKEEVIGSQTKVKVVKNKVSPPFKTADFDIMYGSGISKEGEIIDLGVKLDIVEKSGSWFSYKNVRIGQGRENVKQYLKEHPQISNEIEKIIREKSSKITNINLDQTGEEND.

Glycine 66–threonine 73 lines the ATP pocket.

The protein belongs to the RecA family.

It localises to the cytoplasm. In terms of biological role, can catalyze the hydrolysis of ATP in the presence of single-stranded DNA, the ATP-dependent uptake of single-stranded DNA by duplex DNA, and the ATP-dependent hybridization of homologous single-stranded DNAs. It interacts with LexA causing its activation and leading to its autocatalytic cleavage. This is Protein RecA from Rickettsia massiliae (strain Mtu5).